A 169-amino-acid polypeptide reads, in one-letter code: N5-carboxyaminoimidazole ribonucleotide mutase (169 aa).

Substrate-binding residues include Ser16, Asp19, and Arg46.

This sequence belongs to the AIR carboxylase family. Class I subfamily.

The catalysed reaction is 5-carboxyamino-1-(5-phospho-D-ribosyl)imidazole + H(+) = 5-amino-1-(5-phospho-D-ribosyl)imidazole-4-carboxylate. Its pathway is purine metabolism; IMP biosynthesis via de novo pathway; 5-amino-1-(5-phospho-D-ribosyl)imidazole-4-carboxylate from 5-amino-1-(5-phospho-D-ribosyl)imidazole (N5-CAIR route): step 2/2. Functionally, catalyzes the conversion of N5-carboxyaminoimidazole ribonucleotide (N5-CAIR) to 4-carboxy-5-aminoimidazole ribonucleotide (CAIR). This Escherichia coli O157:H7 protein is N5-carboxyaminoimidazole ribonucleotide mutase.